We begin with the raw amino-acid sequence, 224 residues long: Response regulator protein GraR (224 aa).

The region spanning 2–115 (QILLVEDDNT…VLIAKLQAIY (114 aa)) is the Response regulatory domain. The residue at position 51 (Asp51) is a 4-aspartylphosphate. Residues 126-224 (KRTLTWQDAI…KVGKGYMAHE (99 aa)) constitute a DNA-binding region (ompR/PhoB-type). Residues Thr128, Thr130, and Thr149 each carry the phosphothreonine modification.

In terms of assembly, interacts with GraX. Post-translationally, phosphorylated by GraS. Phosphorylated by Stk1; phosphorylation increases the DNA-binding activity of GraR.

It is found in the cytoplasm. Functionally, member of the two-component regulatory system GraR/GraS involved in resistance against cationic antimicrobial peptides (CAMPs). Upon phosphorylation by GraS, functions as a transcription regulator by direct binding to promoter regions of target genes such as adhesins, exoproteins, transporters, toxins, and proteins involved in cell wall synthesis. Down-regulates the expression of many genes involved in RNA and amino acid synthesis or glycolysis. The chain is Response regulator protein GraR (graR) from Staphylococcus aureus (strain bovine RF122 / ET3-1).